The chain runs to 215 residues: Mediator of RNA polymerase II transcription subunit 18 (215 aa).

This sequence belongs to the Mediator complex subunit 18 family. Component of the Mediator complex.

It is found in the nucleus. In terms of biological role, component of the Mediator complex, a coactivator involved in the regulated transcription of nearly all RNA polymerase II-dependent genes. Mediator functions as a bridge to convey information from gene-specific regulatory proteins to the basal RNA polymerase II transcription machinery. Mediator is recruited to promoters by direct interactions with regulatory proteins and serves as a scaffold for the assembly of a functional preinitiation complex with RNA polymerase II and the general transcription factors. In Aedes aegypti (Yellowfever mosquito), this protein is Mediator of RNA polymerase II transcription subunit 18 (MED18).